Consider the following 150-residue polypeptide: Transcriptional regulator MraZ (150 aa).

2 SpoVT-AbrB domains span residues 11 to 53 (TYTP…PFDE) and 82 to 125 (AVDQ…NKDT).

This sequence belongs to the MraZ family. Forms oligomers.

The protein resides in the cytoplasm. It is found in the nucleoid. The sequence is that of Transcriptional regulator MraZ from Bifidobacterium longum (strain NCC 2705).